The chain runs to 756 residues: 1,4-alpha-glucan branching enzyme GlgB (756 aa).

Catalysis depends on D431, which acts as the Nucleophile. The active-site Proton donor is the E484.

This sequence belongs to the glycosyl hydrolase 13 family. GlgB subfamily. Monomer.

It catalyses the reaction Transfers a segment of a (1-&gt;4)-alpha-D-glucan chain to a primary hydroxy group in a similar glucan chain.. It participates in glycan biosynthesis; glycogen biosynthesis. In terms of biological role, catalyzes the formation of the alpha-1,6-glucosidic linkages in glycogen by scission of a 1,4-alpha-linked oligosaccharide from growing alpha-1,4-glucan chains and the subsequent attachment of the oligosaccharide to the alpha-1,6 position. The protein is 1,4-alpha-glucan branching enzyme GlgB of Prochlorococcus marinus (strain MIT 9303).